The chain runs to 189 residues: Ras-like protein 1 (189 aa).

10–17 contacts GTP; it reads GAGGVGKS. Residues 32-40 carry the Effector region motif; it reads YDPTIEDSY. GTP contacts are provided by residues 57 to 61 and 116 to 119; these read DTAGQ and NKCD. Residue Cys-186 is modified to Cysteine methyl ester. The S-geranylgeranyl cysteine moiety is linked to residue Cys-186. A propeptide spans 187–189 (removed in mature form); that stretch reads KIL.

The protein belongs to the small GTPase superfamily. Ras family.

It localises to the cell membrane. The enzyme catalyses GTP + H2O = GDP + phosphate + H(+). With respect to regulation, alternates between an inactive form bound to GDP and an active form bound to GTP. Activated by a guanine nucleotide-exchange factor (GEF) and inactivated by a GTPase-activating protein (GAP). Functionally, ras proteins bind GDP/GTP and possess intrinsic GTPase activity. Plays a role in eye development by regulating cell growth, survival of postmitotic ommatidial cells and differentiation of photoreceptor cells. During larval development, mediates Ptth/tor signaling leading to the production of ecdysone, a hormone required for the initiation of metamorphosis. This chain is Ras-like protein 1, found in Drosophila persimilis (Fruit fly).